The chain runs to 160 residues: Ribosomal RNA large subunit methyltransferase H (160 aa).

Residues Leu-77 and Gly-109 each contribute to the S-adenosyl-L-methionine site.

The protein belongs to the RNA methyltransferase RlmH family. In terms of assembly, homodimer.

Its subcellular location is the cytoplasm. It catalyses the reaction pseudouridine(1915) in 23S rRNA + S-adenosyl-L-methionine = N(3)-methylpseudouridine(1915) in 23S rRNA + S-adenosyl-L-homocysteine + H(+). Its function is as follows. Specifically methylates the pseudouridine at position 1915 (m3Psi1915) in 23S rRNA. This is Ribosomal RNA large subunit methyltransferase H from Moorella thermoacetica (strain ATCC 39073 / JCM 9320).